A 709-amino-acid chain; its full sequence is Early transcription factor 82 kDa subunit (709 aa).

It belongs to the poxviridae VETF large subunit family. Heterodimer of a 70 kDa and a 82 kDa subunit. Part of the early transcription complex composed of ETF, RAP94, and the DNA-directed RNA polymerase.

The protein resides in the virion. In terms of biological role, acts with RNA polymerase to initiate transcription from early gene promoters. Is recruited by the RPO-associated protein of 94 kDa (RAP94) to form the early transcription complex, which also contains the core RNA polymerase. ETF heterodimer binds to early gene promoters. The polypeptide is Early transcription factor 82 kDa subunit (VETFL) (Vertebrata (FPV)).